The sequence spans 428 residues: Serine--tRNA ligase (428 aa).

231–233 provides a ligand contact to L-serine; sequence TAE. 262–264 is a binding site for ATP; that stretch reads RSE. Residue Glu285 coordinates L-serine. 349-352 lines the ATP pocket; the sequence is EISS. Ser385 is an L-serine binding site.

It belongs to the class-II aminoacyl-tRNA synthetase family. Type-1 seryl-tRNA synthetase subfamily. As to quaternary structure, homodimer. The tRNA molecule binds across the dimer.

It is found in the cytoplasm. It carries out the reaction tRNA(Ser) + L-serine + ATP = L-seryl-tRNA(Ser) + AMP + diphosphate + H(+). The enzyme catalyses tRNA(Sec) + L-serine + ATP = L-seryl-tRNA(Sec) + AMP + diphosphate + H(+). It participates in aminoacyl-tRNA biosynthesis; selenocysteinyl-tRNA(Sec) biosynthesis; L-seryl-tRNA(Sec) from L-serine and tRNA(Sec): step 1/1. Functionally, catalyzes the attachment of serine to tRNA(Ser). Is also able to aminoacylate tRNA(Sec) with serine, to form the misacylated tRNA L-seryl-tRNA(Sec), which will be further converted into selenocysteinyl-tRNA(Sec). This chain is Serine--tRNA ligase, found in Staphylococcus epidermidis (strain ATCC 35984 / DSM 28319 / BCRC 17069 / CCUG 31568 / BM 3577 / RP62A).